The sequence spans 370 residues: Formate dehydrogenase (370 aa).

Substrate contacts are provided by I94 and N120. NAD(+)-binding positions include 175–176 (RI), D196, 231–235 (PLHES), T257, D283, and 312–315 (HMSG).

It belongs to the D-isomer specific 2-hydroxyacid dehydrogenase family. FDH subfamily. In terms of assembly, homodimer.

It localises to the cytoplasm. The enzyme catalyses formate + NAD(+) = CO2 + NADH. Its function is as follows. Catalyzes the NAD(+)-dependent oxidation of formate to carbon dioxide. Formate oxidation is the final step in the methanol oxidation pathway in methylotrophic microorganisms. Has a role in the detoxification of exogenous formate in non-methylotrophic organisms. The chain is Formate dehydrogenase from Chaetomium thermophilum (strain DSM 1495 / CBS 144.50 / IMI 039719) (Thermochaetoides thermophila).